The sequence spans 177 residues: Nucleoside triphosphate/diphosphate phosphatase (177 aa).

R23 serves as the catalytic Proton donor. Residues N87, D103, D105, D107, D120, and E123 each contribute to the Mg(2+) site.

It belongs to the Ntdp family. It depends on Mg(2+) as a cofactor.

It catalyses the reaction a ribonucleoside 5'-triphosphate + H2O = a ribonucleoside 5'-diphosphate + phosphate + H(+). The catalysed reaction is a ribonucleoside 5'-diphosphate + H2O = a ribonucleoside 5'-phosphate + phosphate + H(+). Its function is as follows. Has nucleoside phosphatase activity towards nucleoside triphosphates and nucleoside diphosphates. This Streptococcus mutans serotype c (strain ATCC 700610 / UA159) protein is Nucleoside triphosphate/diphosphate phosphatase.